A 324-amino-acid chain; its full sequence is Interactor of constitutive active ROPs 4 (324 aa).

Disordered regions lie at residues 1-74 (MPKP…SGLE), 91-156 (LAKA…ASKE), 175-201 (SLSEENETLKDQLKKTDTEMSCAKAKE), and 289-324 (FVGSPGMADDSDDGSGKRKSSGKKMFGDLWKKKGQK). The span at 13-28 (QRQSPRLRTSLLSTSS) shows a compositional bias: low complexity. 3 stretches are compositionally biased toward basic and acidic residues: residues 29–50 (DPHHLSRPITDRSPKLGLDRRS), 95–106 (EAAKKRAQEELH), and 118–156 (PERDDIPGDGHQETDVFEVLDEKAKESEKTKNDELASKE). Residues 62–266 (SQKKLGSRIS…ADAAAAVLSG (205 aa)) are a coiled coil. Basic and acidic residues predominate over residues 313–324 (MFGDLWKKKGQK).

The protein belongs to the ICR family. As to quaternary structure, interacts with ARAC11 in vitro.

Acts as a scaffold, mediating interaction of ROPs with different proteins. The sequence is that of Interactor of constitutive active ROPs 4 (ICR4) from Arabidopsis thaliana (Mouse-ear cress).